The chain runs to 460 residues: Cyclin-A1-1 (460 aa).

Disordered regions lie at residues 1–52 and 95–126; these read MSNI…ITNQ and PHKV…KSPQ. 2 stretches are compositionally biased toward low complexity: residues 10–19 and 100–111; these read SSFSSSTKSS and SSPSKSDDGSVS.

It belongs to the cyclin family. Cyclin AB subfamily. In terms of assembly, interacts with FZR2/CCS52A1, FZR1/CCS52A2 and FZR3/CCS52B.

The protein is Cyclin-A1-1 (CYCA1-1) of Arabidopsis thaliana (Mouse-ear cress).